The sequence spans 118 residues: Large ribosomal subunit protein bL17 (118 aa).

This sequence belongs to the bacterial ribosomal protein bL17 family. In terms of assembly, part of the 50S ribosomal subunit. Contacts protein L32.

This is Large ribosomal subunit protein bL17 from Thermus thermophilus (strain ATCC BAA-163 / DSM 7039 / HB27).